The chain runs to 436 residues: Ribulose bisphosphate carboxylase large chain (436 aa).

Positions 104 and 154 each coordinate substrate. Catalysis depends on Lys-156, which acts as the Proton acceptor. Residue Lys-158 participates in substrate binding. 3 residues coordinate Mg(2+): Lys-182, Asp-184, and Glu-185. The residue at position 182 (Lys-182) is an N6-carboxylysine. His-275 acts as the Proton acceptor in catalysis. Residues Arg-276, His-308, and Ser-360 each contribute to the substrate site.

This sequence belongs to the RuBisCO large chain family. Type I subfamily. Heterohexadecamer of 8 large chains and 8 small chains; disulfide-linked. The disulfide link is formed within the large subunit homodimers. The cofactor is Mg(2+). In terms of processing, the disulfide bond which can form in the large chain dimeric partners within the hexadecamer appears to be associated with oxidative stress and protein turnover.

The protein resides in the plastid. Its subcellular location is the chloroplast. The catalysed reaction is 2 (2R)-3-phosphoglycerate + 2 H(+) = D-ribulose 1,5-bisphosphate + CO2 + H2O. It carries out the reaction D-ribulose 1,5-bisphosphate + O2 = 2-phosphoglycolate + (2R)-3-phosphoglycerate + 2 H(+). In terms of biological role, ruBisCO catalyzes two reactions: the carboxylation of D-ribulose 1,5-bisphosphate, the primary event in carbon dioxide fixation, as well as the oxidative fragmentation of the pentose substrate in the photorespiration process. Both reactions occur simultaneously and in competition at the same active site. In Euglena anabaena (Euglenaria anabaena), this protein is Ribulose bisphosphate carboxylase large chain.